The primary structure comprises 370 residues: MFMASTTSAVPWHLSQPTPAGNGSEGELLTARDPLLAQAELALLSTVFVAVALSNGLVLGALVRRGRRGRWAPMHVFIGHLCLADLAVALFQVLPQLAWDATDRFRGPDALCRAVKYLQMVGMYASSYMILAMTLDRHRAICRPMLAHRHGGGTHWNRPVLLAWAFSLLFSLPQLFIFAQRDVDGSGVLDCWARFAEPWGLRAYVTWIALMVFVAPALGIAACQVLIFREIHASLGPGPVPRAGGPRRGCRPGSPAEGARVSAAVAKTVKMTLVIVIVYVLCWAPFFLVQLWAAWDPEAPREGPPFVLLMLLASLNSCTNPWIYASFSSSISSELRSLLCCTWRRAPPSPGPQEESCATASSFLAKDTPS.

A compositionally biased stretch (polar residues) spans M1–G21. The disordered stretch occupies residues M1–G26. The Extracellular portion of the chain corresponds to M1–Q38. N22 is a glycosylation site (N-linked (GlcNAc...) asparagine). A helical membrane pass occupies residues A39 to V63. Residues R64–F77 lie on the Cytoplasmic side of the membrane. A helical membrane pass occupies residues I78 to A98. Residues W99–R113 are Extracellular-facing. Residues A114–L135 traverse the membrane as a helical segment. Residues D136–P159 are Cytoplasmic-facing. The chain crosses the membrane as a helical span at residues V160 to Q180. Residues R181–W199 lie on the Extracellular side of the membrane. A helical membrane pass occupies residues G200–G219. At I220–K270 the chain is on the cytoplasmic side. The chain crosses the membrane as a helical span at residues M271–W292. Residues A293–V307 are Extracellular-facing. The chain crosses the membrane as a helical span at residues L308–F327. Residues S328–S370 are Cytoplasmic-facing. Residues C340 and C341 are each lipidated (S-palmitoyl cysteine). Positions P347–S370 are disordered.

Belongs to the G-protein coupled receptor 1 family. Vasopressin/oxytocin receptor subfamily. As to quaternary structure, interacts with ARRDC4. Identified in a complex containing at least ARRDC4, V2R and HGS. Interacts with TMEM147.

It localises to the cell membrane. In terms of biological role, receptor for arginine vasopressin. The activity of this receptor is mediated by G proteins which activate adenylate cyclase. Involved in renal water reabsorption. This is Vasopressin V2 receptor (AVPR2) from Bos taurus (Bovine).